Consider the following 856-residue polypeptide: Dynein regulatory complex subunit 7 (856 aa).

A compositionally biased stretch (basic and acidic residues) spans 1 to 11 (MEYLEDNKTET). Disordered stretches follow at residues 1-30 (MEYL…SDEV) and 255-277 (KMEE…AEKP). Over residues 12 to 30 (FEEEDKEREEDQVLDSDEV) the composition is skewed to acidic residues. Coiled coils occupy residues 245-276 (AVQQ…DAEK), 661-733 (LQQA…ELDY), and 764-790 (KQRL…KKQQ).

The protein belongs to the DRC7 family. Component of the nexin-dynein regulatory complex (N-DRC).

Its subcellular location is the cell projection. The protein resides in the cilium. It localises to the flagellum. The protein localises to the cytoplasm. It is found in the cytoskeleton. Its subcellular location is the cilium axoneme. The protein resides in the flagellum axoneme. Its function is as follows. Component of the nexin-dynein regulatory complex (N-DRC) a key regulator of ciliary/flagellar motility which maintains the alignment and integrity of the distal axoneme and regulates microtubule sliding in motile axonemes. Involved in the regulation of flagellar motility. Essential for male fertility, sperm head morphogenesis and sperm flagellum formation. The polypeptide is Dynein regulatory complex subunit 7 (drc7) (Xenopus tropicalis (Western clawed frog)).